We begin with the raw amino-acid sequence, 124 residues long: Insulin-like growth factor 1 (124 aa).

The propeptide occupies Ile1–Ala19. Residues Gly20 to Thr48 are b. Intrachain disulfides connect Cys25-Cys67, Cys37-Cys80, and Cys66-Cys71. Residues Gly49–Lys60 are c. Residues Gly61–Ala81 form an a region. Residues Pro82–Ala89 are d. The tract at residues Pro86 to Met124 is disordered. A propeptide spans Arg90–Met124 (e peptide). Residues Arg96–Leu109 show a composition bias toward basic and acidic residues. Polar residues predominate over residues Lys110 to Met124.

This sequence belongs to the insulin family.

The protein localises to the secreted. The insulin-like growth factors, isolated from plasma, are structurally and functionally related to insulin but have a much higher growth-promoting activity. Acts as a ligand for IGF1R. Binds to the alpha subunit of IGF1R, leading to the activation of the intrinsic tyrosine kinase activity which autophosphorylates tyrosine residues in the beta subunit thus initiatiating a cascade of down-stream signaling events leading to activation of the PI3K-AKT/PKB and the Ras-MAPK pathways. Binds to integrins. Its binding to integrins and subsequent ternary complex formation with integrins and IGFR1 are essential for IGF1 signaling. This Coturnix japonica (Japanese quail) protein is Insulin-like growth factor 1.